We begin with the raw amino-acid sequence, 239 residues long: tRNA (guanine-N(7)-)-methyltransferase (239 aa).

S-adenosyl-L-methionine is bound by residues Glu69, Glu94, Asp121, and Asp144. Asp144 is a catalytic residue. Lys148 contributes to the substrate binding site. The segment at 150 to 155 is interaction with RNA; the sequence is RHNKRR. Substrate is bound by residues Asp180 and 217 to 220; that span reads TKFE.

The protein belongs to the class I-like SAM-binding methyltransferase superfamily. TrmB family. In terms of assembly, monomer.

The enzyme catalyses guanosine(46) in tRNA + S-adenosyl-L-methionine = N(7)-methylguanosine(46) in tRNA + S-adenosyl-L-homocysteine. Its pathway is tRNA modification; N(7)-methylguanine-tRNA biosynthesis. In terms of biological role, catalyzes the formation of N(7)-methylguanine at position 46 (m7G46) in tRNA. This is tRNA (guanine-N(7)-)-methyltransferase from Serratia proteamaculans (strain 568).